The following is a 60-amino-acid chain: Large ribosomal subunit protein uL30 (60 aa).

This sequence belongs to the universal ribosomal protein uL30 family. In terms of assembly, part of the 50S ribosomal subunit.

The protein is Large ribosomal subunit protein uL30 of Shewanella woodyi (strain ATCC 51908 / MS32).